The primary structure comprises 395 residues: Multidrug resistance protein MdtL (395 aa).

The Cytoplasmic segment spans residues 1–3 (MKR). Residues 4-24 (FLLCSFALVLLYPAGIDMYLV) form a helical membrane-spanning segment. Residues 25 to 41 (GLPRIAADLNASEAQLH) lie on the Periplasmic side of the membrane. A helical transmembrane segment spans residues 42–62 (IAFSVYLAGMATAMLFAGKIA). Topologically, residues 63–68 (DQSGRK) are cytoplasmic. The chain crosses the membrane as a helical span at residues 69–89 (PVAIVGALVFMMASLLCSRAS). At 90-92 (EGS) the chain is on the periplasmic side. Residues 93-113 (LFLSGRFLQGVGAGGCYVVAF) traverse the membrane as a helical segment. Topologically, residues 114–130 (AILRDTLDEHRRAKVLS) are cytoplasmic. A helical transmembrane segment spans residues 131 to 151 (LLNGITCIVPVLAPVVGHLIM). The Periplasmic segment spans residues 152–157 (LRFPWQ). A helical transmembrane segment spans residues 158-178 (SLFYTMSAMGIIVGLLSLFIL). The Cytoplasmic segment spans residues 179-216 (RETRPVRLAPRDLSRSSPAAESLINRFFVSRLAITTLS). A helical membrane pass occupies residues 217 to 237 (VSVILTFVNASPVLLMEVMGF). At 238 to 246 (SRGDYAITM) the chain is on the periplasmic side. Residues 247–267 (ALTAGVSMVVSFSTPFALGLF) traverse the membrane as a helical segment. Over 268–270 (KPR) the chain is Cytoplasmic. Residues 271–291 (TLMLVSQGLFLTAGVTLSLAH) traverse the membrane as a helical segment. Residues 292–294 (TNT) lie on the Periplasmic side of the membrane. The chain crosses the membrane as a helical span at residues 295 to 315 (VTLFGLTLICAGFSVGFGVAM). Residues 316–327 (SQALGPFSLRAG) lie on the Cytoplasmic side of the membrane. Residues 328–350 (VASSTLGIAQVCGSSLWIWLAAI) form a helical membrane-spanning segment. The Periplasmic portion of the chain corresponds to 351–354 (LGIS). Residues 355–377 (AMNMLIGILIGCSIVSILLIFSV) traverse the membrane as a helical segment. Residues 378–395 (TPNRSVAEHEEIPYQSRP) are Cytoplasmic-facing.

The protein belongs to the major facilitator superfamily. DHA1 family. MdtL (TC 2.A.1.2.22) subfamily.

It is found in the cell inner membrane. This Salmonella typhimurium (strain LT2 / SGSC1412 / ATCC 700720) protein is Multidrug resistance protein MdtL (mdtL).